The primary structure comprises 311 residues: Methionyl-tRNA formyltransferase (311 aa).

108 to 111 (SILP) lines the (6S)-5,6,7,8-tetrahydrofolate pocket.

The protein belongs to the Fmt family.

The catalysed reaction is L-methionyl-tRNA(fMet) + (6R)-10-formyltetrahydrofolate = N-formyl-L-methionyl-tRNA(fMet) + (6S)-5,6,7,8-tetrahydrofolate + H(+). Its function is as follows. Attaches a formyl group to the free amino group of methionyl-tRNA(fMet). The formyl group appears to play a dual role in the initiator identity of N-formylmethionyl-tRNA by promoting its recognition by IF2 and preventing the misappropriation of this tRNA by the elongation apparatus. The polypeptide is Methionyl-tRNA formyltransferase (Sorangium cellulosum (strain So ce56) (Polyangium cellulosum (strain So ce56))).